We begin with the raw amino-acid sequence, 316 residues long: 4-amino-5-hydroxymethyl-2-methylpyrimidine phosphate synthase (316 aa).

Lys66 carries the post-translational modification N6-(pyridoxal phosphate)lysine. His70 is a catalytic residue. Residue 118–121 (GEFG) coordinates pyridoxal 5'-phosphate. The CCCFC; essential for catalytic activity, may be the site of iron coordination motif lies at 191–195 (CCCFC).

It belongs to the NMT1/THI5 family. Homodimer. Requires Fe cation as cofactor.

The catalysed reaction is N(6)-(pyridoxal phosphate)-L-lysyl-[4-amino-5-hydroxymethyl-2-methylpyrimidine phosphate synthase] + L-histidyl-[4-amino-5-hydroxymethyl-2-methylpyrimidine phosphate synthase] + 2 Fe(3+) + 4 H2O = L-lysyl-[4-amino-5-hydroxymethyl-2-methylpyrimidine phosphate synthase] + (2S)-2-amino-5-hydroxy-4-oxopentanoyl-[4-amino-5-hydroxymethyl-2-methylpyrimidine phosphate synthase] + 4-amino-2-methyl-5-(phosphooxymethyl)pyrimidine + 3-oxopropanoate + 2 Fe(2+) + 2 H(+). It participates in cofactor biosynthesis; thiamine diphosphate biosynthesis. Functionally, responsible for the formation of the pyrimidine heterocycle in the thiamine biosynthesis pathway. Catalyzes the formation of hydroxymethylpyrimidine phosphate (HMP-P) from histidine and pyridoxal phosphate (PLP). The protein uses PLP and the active site histidine to form HMP-P, generating an inactive enzyme. The enzyme can only undergo a single turnover, which suggests it is a suicide enzyme. This chain is 4-amino-5-hydroxymethyl-2-methylpyrimidine phosphate synthase, found in Legionella pneumophila subsp. pneumophila (strain Philadelphia 1 / ATCC 33152 / DSM 7513).